The chain runs to 278 residues: Energy-coupling factor transporter ATP-binding protein EcfA1 (278 aa).

The ABC transporter domain occupies 5-239; the sequence is LLLESVSYQY…QDKLEAAGID (235 aa). ATP is bound at residue 39–46; the sequence is GPNGSGKS.

This sequence belongs to the ABC transporter superfamily. Energy-coupling factor EcfA family. Forms a stable energy-coupling factor (ECF) transporter complex composed of 2 membrane-embedded substrate-binding proteins (S component), 2 ATP-binding proteins (A component) and 2 transmembrane proteins (T component).

Its subcellular location is the cell membrane. ATP-binding (A) component of a common energy-coupling factor (ECF) ABC-transporter complex. Unlike classic ABC transporters this ECF transporter provides the energy necessary to transport a number of different substrates. The polypeptide is Energy-coupling factor transporter ATP-binding protein EcfA1 (Halalkalibacterium halodurans (strain ATCC BAA-125 / DSM 18197 / FERM 7344 / JCM 9153 / C-125) (Bacillus halodurans)).